Consider the following 183-residue polypeptide: Adenine phosphoribosyltransferase (183 aa).

Belongs to the purine/pyrimidine phosphoribosyltransferase family. In terms of assembly, homodimer.

The protein resides in the cytoplasm. It catalyses the reaction AMP + diphosphate = 5-phospho-alpha-D-ribose 1-diphosphate + adenine. The protein operates within purine metabolism; AMP biosynthesis via salvage pathway; AMP from adenine: step 1/1. Its function is as follows. Catalyzes a salvage reaction resulting in the formation of AMP, that is energically less costly than de novo synthesis. The chain is Adenine phosphoribosyltransferase from Escherichia fergusonii (strain ATCC 35469 / DSM 13698 / CCUG 18766 / IAM 14443 / JCM 21226 / LMG 7866 / NBRC 102419 / NCTC 12128 / CDC 0568-73).